The following is a 376-amino-acid chain: Protein XRP2 (376 aa).

The disordered stretch occupies residues 1 to 55; it reads MGCFFSKKSRRKSPKKDAALPTGDESATGNDLAETNNTALGSNSNQEAPKQYSWD. A lipid anchor (N-myristoyl glycine) is attached at Gly-2. Residue Cys-3 is the site of S-palmitoyl cysteine attachment. Over residues 25-48 the composition is skewed to polar residues; it reads ESATGNDLAETNNTALGSNSNQEA. One can recognise a C-CAP/cofactor C-like domain in the interval 49 to 204; it reads PKQYSWDKRE…NWSNIHDFTP (156 aa). Residues 123 to 124 and 140 to 143 contribute to the GTP site; these read GS and QQFR.

It belongs to the TBCC family. Myristoylated on Gly-2; which may be required for membrane targeting. Post-translationally, palmitoylated on Cys-3; which may be required for plasma membrane targeting. In terms of tissue distribution, in the retina, detected in both rod and cone photoreceptors (at protein level). Has strongest expression in the retinal outer nuclear layer (ONL) and weaker expression in the outer plexiform layer (OPL) and inner plexiform layer (IPL) (at protein level). Expressed in all tissues tested.

Its subcellular location is the cell membrane. It localises to the cell projection. It is found in the cilium. Functionally, acts as a GTPase-activating protein (GAP) involved in trafficking between the Golgi and the ciliary membrane. Acts as a GTPase-activating protein (GAP) for tubulin in concert with tubulin-specific chaperone C, but does not enhance tubulin heterodimerization. In the retina, required for maintenance of rod and cone photoreceptor cells. May have a role in normal retinal localization of the transducins GNB1 and GNAT1, and the rhodopsin kinase GRK1. The polypeptide is Protein XRP2 (Danio rerio (Zebrafish)).